Reading from the N-terminus, the 554-residue chain is Urocanate hydratase (554 aa).

NAD(+) contacts are provided by residues 49–50 (GG), Gln-127, 173–175 (GMG), Glu-193, Arg-198, 239–240 (NA), 260–264 (QTSAH), 270–271 (YI), and Tyr-319. Residue Cys-407 is part of the active site. Position 489 (Gly-489) interacts with NAD(+).

Belongs to the urocanase family. NAD(+) serves as cofactor.

Its subcellular location is the cytoplasm. The enzyme catalyses 4-imidazolone-5-propanoate = trans-urocanate + H2O. It functions in the pathway amino-acid degradation; L-histidine degradation into L-glutamate; N-formimidoyl-L-glutamate from L-histidine: step 2/3. In terms of biological role, catalyzes the conversion of urocanate to 4-imidazolone-5-propionate. The chain is Urocanate hydratase from Bacillus velezensis (strain DSM 23117 / BGSC 10A6 / LMG 26770 / FZB42) (Bacillus amyloliquefaciens subsp. plantarum).